The sequence spans 122 residues: Large ribosomal subunit protein uL14 (122 aa).

This sequence belongs to the universal ribosomal protein uL14 family. In terms of assembly, part of the 50S ribosomal subunit. Forms a cluster with proteins L3 and L19. In the 70S ribosome, L14 and L19 interact and together make contacts with the 16S rRNA in bridges B5 and B8.

Functionally, binds to 23S rRNA. Forms part of two intersubunit bridges in the 70S ribosome. This Mycolicibacterium smegmatis (strain ATCC 700084 / mc(2)155) (Mycobacterium smegmatis) protein is Large ribosomal subunit protein uL14.